The following is a 334-amino-acid chain: Eukaryotic translation initiation factor 3 subunit H (334 aa).

One can recognise an MPN domain in the interval 21-155 (VQIDGLVVLK…LKAYRLTPKL (135 aa)). The interval 247-284 (RNVGKQQQQKHQYTQRKQQENLQRLSRGETPLPEEDVN) is disordered. Residues 251–262 (KQQQQKHQYTQR) are compositionally biased toward low complexity.

It belongs to the eIF-3 subunit H family. In terms of assembly, component of the eukaryotic translation initiation factor 3 (eIF-3) complex, which is composed of 13 subunits: eif3a, eif3b, eif3c, eif3d, eif3e, eif3f, eif3g, eif3h, eif3i, eif3j, eif3k, eif3l and eif3m.

The protein localises to the cytoplasm. In terms of biological role, component of the eukaryotic translation initiation factor 3 (eIF-3) complex, which is involved in protein synthesis of a specialized repertoire of mRNAs and, together with other initiation factors, stimulates binding of mRNA and methionyl-tRNAi to the 40S ribosome. The eIF-3 complex specifically targets and initiates translation of a subset of mRNAs involved in cell proliferation. The polypeptide is Eukaryotic translation initiation factor 3 subunit H (eif3h) (Xenopus laevis (African clawed frog)).